The primary structure comprises 236 residues: WUSCHEL-related homeobox 4 (236 aa).

Positions 88-152 form a DNA-binding region, homeobox; WUS-type; that stretch reads AGTTRWNPSA…NHKARERQKQ (65 aa). Residues 169 to 188 are disordered; sequence PATANETKEAPEKKEKDVED. Over residues 174–187 the composition is skewed to basic and acidic residues; that stretch reads ETKEAPEKKEKDVE.

It belongs to the WUS homeobox family.

Its subcellular location is the nucleus. Functionally, transcription factor which may be involved in developmental processes. The sequence is that of WUSCHEL-related homeobox 4 (WOX4) from Oryza sativa subsp. indica (Rice).